Consider the following 67-residue polypeptide: Large ribosomal subunit protein bL31 (67 aa).

Belongs to the bacterial ribosomal protein bL31 family. Type A subfamily. In terms of assembly, part of the 50S ribosomal subunit.

Functionally, binds the 23S rRNA. In Finegoldia magna (strain ATCC 29328 / DSM 20472 / WAL 2508) (Peptostreptococcus magnus), this protein is Large ribosomal subunit protein bL31.